Here is a 146-residue protein sequence, read N- to C-terminus: uncharacterized protein (146 aa).

Over residues 86-96 (EFDSPMDEEEE) the composition is skewed to acidic residues. The tract at residues 86-124 (EFDSPMDEEEETKPREASLDQTAPKKSKKEELLVKNNNF) is disordered.

This is an uncharacterized protein from Ostreid herpesvirus 1 (isolate France) (OsHV-1).